The chain runs to 1041 residues: Probable rhamnogalacturonate lyase C (1041 aa).

An N-terminal signal peptide occupies residues 1-21 (MFASTLRKTFVFLGLATYSAA). Residues N28, N94, N116, N142, N231, N283, N528, and N634 are each glycosylated (N-linked (GlcNAc...) asparagine). Residues 703-728 (ISRPCPRKGGTRRRKKERKKEGKKQG) are disordered. Basic residues predominate over residues 707–720 (CPRKGGTRRRKKER). N-linked (GlcNAc...) asparagine glycosylation occurs at N864.

The protein belongs to the polysaccharide lyase 4 family.

Its subcellular location is the secreted. It catalyses the reaction Endotype eliminative cleavage of L-alpha-rhamnopyranosyl-(1-&gt;4)-alpha-D-galactopyranosyluronic acid bonds of rhamnogalacturonan I domains in ramified hairy regions of pectin leaving L-rhamnopyranose at the reducing end and 4-deoxy-4,5-unsaturated D-galactopyranosyluronic acid at the non-reducing end.. Pectinolytic enzymes consist of four classes of enzymes: pectin lyase, polygalacturonase, pectin methylesterase and rhamnogalacturonase. Degrades the rhamnogalacturonan I (RG-I) backbone of pectin. This chain is Probable rhamnogalacturonate lyase C (rglC), found in Emericella nidulans (strain FGSC A4 / ATCC 38163 / CBS 112.46 / NRRL 194 / M139) (Aspergillus nidulans).